Reading from the N-terminus, the 178-residue chain is RNA-binding protein (178 aa).

Residues 108 to 178 (SGFQKPKIGS…KGKGRRGGKR (71 aa)) form a disordered region. Over residues 168 to 178 (SKGKGRRGGKR) the composition is skewed to basic residues.

This sequence belongs to the phytoreovirus RNA-binding protein family.

It is found in the host cytoplasm. Functionally, constituent of viral factories. Binds to ssRNA and dsRNA. The protein is RNA-binding protein of Wound tumor virus (strain NJ) (WTV).